The primary structure comprises 546 residues: Probable protein kinase UbiB (546 aa).

One can recognise a Protein kinase domain in the interval 124–502; it reads DFEIKPLASA…HVRQGQSRYF (379 aa). ATP contacts are provided by residues 130–138 and Lys-153; that span reads LASASIAQV. The active-site Proton acceptor is Asp-288. 2 consecutive transmembrane segments (helical) span residues 501-521 and 522-542; these read YFLG…VSRP and EWGL…FVGW.

This sequence belongs to the ABC1 family. UbiB subfamily.

It is found in the cell inner membrane. It functions in the pathway cofactor biosynthesis; ubiquinone biosynthesis [regulation]. Functionally, is probably a protein kinase regulator of UbiI activity which is involved in aerobic coenzyme Q (ubiquinone) biosynthesis. The protein is Probable protein kinase UbiB of Escherichia coli (strain SMS-3-5 / SECEC).